Reading from the N-terminus, the 255-residue chain is Increased copper sensitivity protein 2 (255 aa).

Residues 1-12 are compositionally biased toward basic and acidic residues; that stretch reads MGKFEQKERERI. Disordered stretches follow at residues 1–32 and 82–142; these read MGKF…KSLG and PGDK…RKSH. Over residues 13–30 the composition is skewed to polar residues; it reads STFSFPTTGSQSSTSIKS. Residues 131–142 show a composition bias toward basic residues; that stretch reads SGRRKSYHRKSH. Residue serine 217 is modified to Phosphoserine.

This Saccharomyces cerevisiae (strain ATCC 204508 / S288c) (Baker's yeast) protein is Increased copper sensitivity protein 2 (ICS2).